Reading from the N-terminus, the 657-residue chain is THO complex subunit 1 (657 aa).

N-acetylmethionine is present on Met1. Ser2 carries the post-translational modification Phosphoserine. Thr4 bears the Phosphothreonine mark. Lys31 participates in a covalent cross-link: Glycyl lysine isopeptide (Lys-Gly) (interchain with G-Cter in SUMO2). Lys133 carries the post-translational modification N6-acetyllysine. Residues 133 to 167 (KNYLLRMCNDLLRRLSKSQNTVFCGRIQLFLARLF) are dock domain; interaction with THOC2. The disordered stretch occupies residues 194 to 222 (QESTLGQKHTEDREEGMDVEEGEMGDEEA). A compositionally biased stretch (acidic residues) spans 206–222 (REEGMDVEEGEMGDEEA). Residues 227–397 (SIPIDYNLYR…WNSWKNEGCP (171 aa)) are dock domain; interaction with THOC2. An N6-acetyllysine modification is found at Lys300. Lys408 participates in a covalent cross-link: Glycyl lysine isopeptide (Lys-Gly) (interchain with G-Cter in SUMO2). The short motif at 414–430 (RKRTAPEDFLGKGPTKK) is the Nuclear localization signal element. The interval 533-569 (LPPPSEEIKTGEDEDEEDNDALLKENESPDVRRDKPV) is disordered. Ser537 is subject to Phosphoserine. Position 542 is a phosphothreonine (Thr542). A compositionally biased stretch (basic and acidic residues) spans 553 to 569 (ALLKENESPDVRRDKPV). Residue Ser560 is modified to Phosphoserine. The Death domain occupies 570 to 653 (TGEQIEVFAN…DLAESLTNDN (84 aa)). Residue Lys580 forms a Glycyl lysine isopeptide (Lys-Gly) (interchain with G-Cter in SUMO2) linkage. Lys595 is covalently cross-linked (Glycyl lysine isopeptide (Lys-Gly) (interchain with G-Cter in SUMO1); alternate). Lys595 is covalently cross-linked (Glycyl lysine isopeptide (Lys-Gly) (interchain with G-Cter in SUMO2); alternate).

The protein belongs to the THOC1 family. As to quaternary structure, component of the THO subcomplex, which is composed of THOC1, THOC2, THOC3, THOC5, THOC6 and THOC7. The THO subcomplex interacts with DDX39B to form the THO-DDX39B complex which multimerizes into a 28-subunit tetrameric assembly. Component of the transcription/export (TREX) complex at least composed of ALYREF/THOC4, DDX39B, SARNP/CIP29, CHTOP and the THO subcomplex; in the complex interacts with THOC2, THOC5 and THOC7. TREX seems to have a dynamic structure involving ATP-dependent remodeling. Binds to the hypophosphorylated form of RB1. Interacts with RNA polymerase II. Interacts with LUZP4. Post-translationally, expression is altered specifically during apoptosis and is accompanied by the appearance of novel forms with smaller apparent molecular mass. Polyubiquitinated, leading to proteasomal degradation; probably involves NEDD4. Ubiquitous. Expressed in various cancer cell lines. Expressed at very low levels in normal breast epithelial cells and highly expressed in breast tumors. Expression is strongly associated with an aggressive phenotype of breast tumors and expression correlates with tumor size and the metastatic state of the tumor progression.

Its subcellular location is the nucleus speckle. It is found in the nucleus. The protein localises to the nucleoplasm. The protein resides in the nucleus matrix. It localises to the cytoplasm. In terms of biological role, component of the THO subcomplex of the TREX complex which is thought to couple mRNA transcription, processing and nuclear export, and which specifically associates with spliced mRNA and not with unspliced pre-mRNA. Required for efficient export of polyadenylated RNA. The THOC1-THOC2-THOC3 core complex alone is sufficient to bind export factor NXF1-NXT1 and promote ATPase activity of DDX39B/UAP56. TREX is recruited to spliced mRNAs by a transcription-independent mechanism, binds to mRNA upstream of the exon-junction complex (EJC) and is recruited in a splicing- and cap-dependent manner to a region near the 5' end of the mRNA where it functions in mRNA export to the cytoplasm via the TAP/NXF1 pathway. Regulates transcriptional elongation of a subset of genes. Involved in genome stability by preventing co-transcriptional R-loop formation. May play a role in hair cell formation, hence may be involved in hearing. Participates in an apoptotic pathway which is characterized by activation of caspase-6, increases in the expression of BAK1 and BCL2L1 and activation of NF-kappa-B. This pathway does not require p53/TP53, nor does the presence of p53/TP53 affect the efficiency of cell killing. Activates a G2/M cell cycle checkpoint prior to the onset of apoptosis. Apoptosis is inhibited by association with RB1. Functionally, (Microbial infection) The TREX complex is essential for the export of Kaposi's sarcoma-associated herpesvirus (KSHV) intronless mRNAs and infectious virus production. This chain is THO complex subunit 1 (THOC1), found in Homo sapiens (Human).